Consider the following 405-residue polypeptide: Argininosuccinate synthase (405 aa).

ATP contacts are provided by residues 12–20 (AYSGGLDTS) and alanine 40. 2 residues coordinate L-citrulline: tyrosine 92 and serine 97. An ATP-binding site is contributed by glycine 122. L-aspartate contacts are provided by threonine 124, asparagine 128, and aspartate 129. Residue asparagine 128 coordinates L-citrulline. 5 residues coordinate L-citrulline: arginine 132, serine 181, serine 190, glutamate 266, and tyrosine 278.

It belongs to the argininosuccinate synthase family. Type 1 subfamily. In terms of assembly, homotetramer.

It is found in the cytoplasm. It catalyses the reaction L-citrulline + L-aspartate + ATP = 2-(N(omega)-L-arginino)succinate + AMP + diphosphate + H(+). It functions in the pathway amino-acid biosynthesis; L-arginine biosynthesis; L-arginine from L-ornithine and carbamoyl phosphate: step 2/3. This is Argininosuccinate synthase from Edwardsiella ictaluri (strain 93-146).